The primary structure comprises 210 residues: Protein-methionine-sulfoxide reductase heme-binding subunit MsrQ (210 aa).

6 helical membrane-spanning segments follow: residues 8-28 (LAVFLAACVAPVWWLYQAWIF), 37-57 (VLVENFGLATLVMLLITLAMT), 75-95 (LGLWCFAYVVLHMTMYALFIL), 110-130 (PYIIVGALAFLGLLALAVTSN), 147-167 (LVYVILGLGLLHMFWIVRADL), and 169-189 (EWALYAGIGAILLLLRVPMIA).

The protein belongs to the MsrQ family. In terms of assembly, heterodimer of a catalytic subunit (MsrP) and a heme-binding subunit (MsrQ). FMN serves as cofactor. It depends on heme b as a cofactor.

The protein localises to the cell inner membrane. Functionally, part of the MsrPQ system that repairs oxidized periplasmic proteins containing methionine sulfoxide residues (Met-O), using respiratory chain electrons. Thus protects these proteins from oxidative-stress damage caused by reactive species of oxygen and chlorine generated by the host defense mechanisms. MsrPQ is essential for the maintenance of envelope integrity under bleach stress, rescuing a wide series of structurally unrelated periplasmic proteins from methionine oxidation. MsrQ provides electrons for reduction to the reductase catalytic subunit MsrP, using the quinone pool of the respiratory chain. The chain is Protein-methionine-sulfoxide reductase heme-binding subunit MsrQ from Pseudomonas syringae pv. tomato (strain ATCC BAA-871 / DC3000).